We begin with the raw amino-acid sequence, 180 residues long: ATP synthase subunit delta (180 aa).

This sequence belongs to the ATPase delta chain family. F-type ATPases have 2 components, F(1) - the catalytic core - and F(0) - the membrane proton channel. F(1) has five subunits: alpha(3), beta(3), gamma(1), delta(1), epsilon(1). F(0) has three main subunits: a(1), b(2) and c(10-14). The alpha and beta chains form an alternating ring which encloses part of the gamma chain. F(1) is attached to F(0) by a central stalk formed by the gamma and epsilon chains, while a peripheral stalk is formed by the delta and b chains.

The protein localises to the cell inner membrane. F(1)F(0) ATP synthase produces ATP from ADP in the presence of a proton or sodium gradient. F-type ATPases consist of two structural domains, F(1) containing the extramembraneous catalytic core and F(0) containing the membrane proton channel, linked together by a central stalk and a peripheral stalk. During catalysis, ATP synthesis in the catalytic domain of F(1) is coupled via a rotary mechanism of the central stalk subunits to proton translocation. In terms of biological role, this protein is part of the stalk that links CF(0) to CF(1). It either transmits conformational changes from CF(0) to CF(1) or is implicated in proton conduction. The sequence is that of ATP synthase subunit delta from Cupriavidus necator (strain ATCC 17699 / DSM 428 / KCTC 22496 / NCIMB 10442 / H16 / Stanier 337) (Ralstonia eutropha).